Consider the following 812-residue polypeptide: Valine--tRNA ligase (812 aa).

A 'HIGH' region motif is present at residues 46–56; it reads PTVSGQLHIGH. The short motif at 536–540 is the 'KMSKS' region element; it reads KMSKS. Lys539 is an ATP binding site.

The protein belongs to the class-I aminoacyl-tRNA synthetase family. ValS type 2 subfamily. As to quaternary structure, monomer.

The protein resides in the cytoplasm. It carries out the reaction tRNA(Val) + L-valine + ATP = L-valyl-tRNA(Val) + AMP + diphosphate. Catalyzes the attachment of valine to tRNA(Val). As ValRS can inadvertently accommodate and process structurally similar amino acids such as threonine, to avoid such errors, it has a 'posttransfer' editing activity that hydrolyzes mischarged Thr-tRNA(Val) in a tRNA-dependent manner. This is Valine--tRNA ligase from Rickettsia conorii (strain ATCC VR-613 / Malish 7).